The following is a 377-amino-acid chain: Ribosomal RNA large subunit methyltransferase G (377 aa).

Belongs to the methyltransferase superfamily. RlmG family.

Its subcellular location is the cytoplasm. The catalysed reaction is guanosine(1835) in 23S rRNA + S-adenosyl-L-methionine = N(2)-methylguanosine(1835) in 23S rRNA + S-adenosyl-L-homocysteine + H(+). Specifically methylates the guanine in position 1835 (m2G1835) of 23S rRNA. In Aeromonas salmonicida (strain A449), this protein is Ribosomal RNA large subunit methyltransferase G.